Reading from the N-terminus, the 313-residue chain is Epoxide hydrolase 1 (313 aa).

The AB hydrolase-1 domain occupies Pro-25–Ala-299. Asp-100 functions as the Nucleophile in the catalytic mechanism. Tyr-149 serves as a coordination point for an epoxide. The active-site Proton donor is the Tyr-227. His-292 (proton acceptor) is an active-site residue.

This sequence belongs to the AB hydrolase superfamily. Epoxide hydrolase family. As to quaternary structure, homodimer. In terms of tissue distribution, highly expressed in fruits 15 days after anthesis (15-DAA).

It catalyses the reaction an epoxide + H2O = an ethanediol. It carries out the reaction (24S)-24,25-epoxycucurbitadienol + H2O = (24R)-24,25-dihydroxycucurbitadienol. It functions in the pathway secondary metabolite biosynthesis; terpenoid biosynthesis. Epoxide hydrolase involved in the biosynthesis of cucurbitacin and mogroside tetracyclic triterpene natural products (e.g. siamenoside I and mogrosides IV, V and VI). Cucurbitacins have cytotoxic properties and exhibit deterrent taste as a defense barrier against herbivores. Mogrosides are nonsugar highly oxygenated compounds used as high-intensity zero-calorie sweeteners; they also possess pharmacological properties such as regulating immunity, lowering blood sugar and lipid levels, protecting the liver, and acting as antioxidants and antitumor agents. Catalyzes the hydrolysis of aromatic epoxide-containing substrates, such as the conversion of 24,25-epoxycucurbitadienol to 24,25-dihydroxycucurbitadienol. The protein is Epoxide hydrolase 1 of Siraitia grosvenorii (Monk's fruit).